The sequence spans 236 residues: Adenosine 5'-phosphosulfate reductase 2 (236 aa).

[4Fe-4S] cluster-binding residues include C122, C123, C205, and C208. The interval N216 to E236 is disordered. C231 acts as the Nucleophile; cysteine thiosulfonate intermediate in catalysis.

Belongs to the PAPS reductase family. CysH subfamily. The cofactor is [4Fe-4S] cluster.

It localises to the cytoplasm. The catalysed reaction is [thioredoxin]-disulfide + sulfite + AMP + 2 H(+) = adenosine 5'-phosphosulfate + [thioredoxin]-dithiol. It functions in the pathway sulfur metabolism; hydrogen sulfide biosynthesis; sulfite from sulfate. Catalyzes the formation of sulfite from adenosine 5'-phosphosulfate (APS) using thioredoxin as an electron donor. This chain is Adenosine 5'-phosphosulfate reductase 2, found in Bacillus subtilis (strain 168).